The primary structure comprises 521 residues: NAD(P)H-quinone oxidoreductase subunit 2 (521 aa).

A run of 14 helical transmembrane segments spans residues 15-35, 42-62, 79-99, 109-126, 131-153, 167-187, 208-228, 242-262, 276-296, 304-324, 332-352, 376-396, 398-418, and 464-484; these read ILPE…DITF, WTPY…YTQW, LSIV…LMSV, IGEF…AMFL, ELVM…TGYM, LLIG…LYGL, LALV…IAAV, PTPV…ALAI, WQFI…VVAI, MLAY…VIGT, VFYL…VILF, LALS…GFFG, LYLF…LGLI, and VGLV…NPLL.

This sequence belongs to the complex I subunit 2 family. In terms of assembly, NDH-1 can be composed of about 15 different subunits; different subcomplexes with different compositions have been identified which probably have different functions.

Its subcellular location is the cellular thylakoid membrane. The enzyme catalyses a plastoquinone + NADH + (n+1) H(+)(in) = a plastoquinol + NAD(+) + n H(+)(out). It catalyses the reaction a plastoquinone + NADPH + (n+1) H(+)(in) = a plastoquinol + NADP(+) + n H(+)(out). NDH-1 shuttles electrons from an unknown electron donor, via FMN and iron-sulfur (Fe-S) centers, to quinones in the respiratory and/or the photosynthetic chain. The immediate electron acceptor for the enzyme in this species is believed to be plastoquinone. Couples the redox reaction to proton translocation, and thus conserves the redox energy in a proton gradient. Cyanobacterial NDH-1 also plays a role in inorganic carbon-concentration. The polypeptide is NAD(P)H-quinone oxidoreductase subunit 2 (Acaryochloris marina (strain MBIC 11017)).